The primary structure comprises 509 residues: Pyruvate kinase (509 aa).

At serine 29 the chain carries Phosphoserine. Arginine 56 serves as a coordination point for substrate. Residues asparagine 58 and serine 60 each contribute to the K(+) site. 58–61 (NFSH) is a binding site for ATP. A Phosphoserine modification is found at serine 63. K(+)-binding residues include aspartate 91 and threonine 92. Positions 98 and 184 each coordinate ATP. Position 249 (glutamate 249) interacts with Mg(2+). Positions 272 and 273 each coordinate substrate. Position 273 (aspartate 273) interacts with Mg(2+). Serine 281 carries the post-translational modification Phosphoserine. Residue threonine 305 participates in substrate binding. Serine 412 bears the Phosphoserine mark.

This sequence belongs to the pyruvate kinase family. In terms of assembly, homotetramer. Requires Mg(2+) as cofactor. It depends on K(+) as a cofactor.

It carries out the reaction pyruvate + ATP = phosphoenolpyruvate + ADP + H(+). The protein operates within carbohydrate degradation; glycolysis; pyruvate from D-glyceraldehyde 3-phosphate: step 5/5. The chain is Pyruvate kinase (pyk1) from Schizosaccharomyces pombe (strain 972 / ATCC 24843) (Fission yeast).